Here is a 240-residue protein sequence, read N- to C-terminus: Glutamine transport ATP-binding protein GlnQ (240 aa).

An ABC transporter domain is found at 2–236 (IEFKNVSKHF…PPSQRLQEFL (235 aa)). An ATP-binding site is contributed by 34 to 41 (GPSGSGKS).

The protein belongs to the ABC transporter superfamily. In terms of assembly, heterotetramer with 2 subunits of GlnQ and 2 subunits of GlnP.

The protein localises to the cell inner membrane. Functionally, part of the binding-protein-dependent transport system for glutamine. Probably responsible for energy coupling to the transport system. The protein is Glutamine transport ATP-binding protein GlnQ (glnQ) of Escherichia coli (strain K12).